A 390-amino-acid chain; its full sequence is Na(+)/H(+) antiporter NhaA (390 aa).

12 consecutive transmembrane segments (helical) span residues alanine 14–asparagine 34, methionine 61–valine 81, serine 97–phenylalanine 117, alanine 126–leucine 146, valine 156–phenylalanine 176, leucine 181–leucine 201, valine 221–leucine 241, alanine 256–valine 276, glycine 280–isoleucine 300, glycine 305–valine 325, isoleucine 330–leucine 350, and tryptophan 362–leucine 382.

This sequence belongs to the NhaA Na(+)/H(+) (TC 2.A.33) antiporter family.

It localises to the cell inner membrane. The catalysed reaction is Na(+)(in) + 2 H(+)(out) = Na(+)(out) + 2 H(+)(in). Functionally, na(+)/H(+) antiporter that extrudes sodium in exchange for external protons. The chain is Na(+)/H(+) antiporter NhaA from Cronobacter sakazakii (strain ATCC BAA-894) (Enterobacter sakazakii).